We begin with the raw amino-acid sequence, 410 residues long: Arginine deiminase (410 aa).

Cys400 acts as the Amidino-cysteine intermediate in catalysis.

This sequence belongs to the arginine deiminase family.

It localises to the cytoplasm. The enzyme catalyses L-arginine + H2O = L-citrulline + NH4(+). It functions in the pathway amino-acid degradation; L-arginine degradation via ADI pathway; carbamoyl phosphate from L-arginine: step 1/2. The polypeptide is Arginine deiminase (Streptococcus agalactiae serotype Ia (strain ATCC 27591 / A909 / CDC SS700)).